The chain runs to 903 residues: HTH-type transcriptional regulator MalT (903 aa).

ATP is bound at residue Cys-39–Thr-46. Positions Glu-832 to Leu-897 constitute an HTH luxR-type domain. Residues Asn-856–Arg-875 constitute a DNA-binding region (H-T-H motif).

Belongs to the MalT family. In terms of assembly, monomer in solution. Oligomerizes to an active state in the presence of the positive effectors ATP and maltotriose.

Its activity is regulated as follows. Activated by ATP and maltotriose, which are both required for DNA binding. Positively regulates the transcription of the maltose regulon whose gene products are responsible for uptake and catabolism of malto-oligosaccharides. Specifically binds to the promoter region of its target genes, recognizing a short DNA motif called the MalT box. This is HTH-type transcriptional regulator MalT from Yersinia enterocolitica serotype O:8 / biotype 1B (strain NCTC 13174 / 8081).